The following is a 436-amino-acid chain: uncharacterized protein (436 aa).

An N-terminal signal peptide occupies residues 1-19; that stretch reads MKKLLLASIIGLASTTSFA.

This is an uncharacterized protein from Rickettsia bellii (strain RML369-C).